The sequence spans 332 residues: D-lactate dehydrogenase (332 aa).

NAD(+)-binding positions include 155-156 (RI), aspartate 175, 206-207 (VP), asparagine 212, and 233-235 (FAR). Catalysis depends on residues arginine 235 and glutamate 264. The active-site Proton donor is the histidine 296.

It belongs to the D-isomer specific 2-hydroxyacid dehydrogenase family. Homodimer.

The catalysed reaction is (R)-lactate + NAD(+) = pyruvate + NADH + H(+). This chain is D-lactate dehydrogenase, found in Lactiplantibacillus pentosus (Lactobacillus pentosus).